We begin with the raw amino-acid sequence, 159 residues long: Lipoprotein signal peptidase (159 aa).

The next 2 helical transmembrane spans lie at 59–79 and 87–107; these read PMIL…YVVF and FLIT…DRIL. Catalysis depends on residues D113 and D139. The helical transmembrane segment at 131–151 threads the bilayer; the sequence is LWPVFNIADSAITIGACVLVI.

This sequence belongs to the peptidase A8 family.

It localises to the cell inner membrane. The enzyme catalyses Release of signal peptides from bacterial membrane prolipoproteins. Hydrolyzes -Xaa-Yaa-Zaa-|-(S,diacylglyceryl)Cys-, in which Xaa is hydrophobic (preferably Leu), and Yaa (Ala or Ser) and Zaa (Gly or Ala) have small, neutral side chains.. Its pathway is protein modification; lipoprotein biosynthesis (signal peptide cleavage). In terms of biological role, this protein specifically catalyzes the removal of signal peptides from prolipoproteins. This Chlorobium phaeobacteroides (strain BS1) protein is Lipoprotein signal peptidase.